We begin with the raw amino-acid sequence, 273 residues long: Large ribosomal subunit protein uL2 (273 aa).

A disordered region spans residues 221-263 (RGTAMNPVDHPHGGGEGRNFGKHPVTPWGVQTKGKKTRHNKRT). Residues 253-263 (KGKKTRHNKRT) show a composition bias toward basic residues.

This sequence belongs to the universal ribosomal protein uL2 family. As to quaternary structure, part of the 50S ribosomal subunit. Forms a bridge to the 30S subunit in the 70S ribosome.

One of the primary rRNA binding proteins. Required for association of the 30S and 50S subunits to form the 70S ribosome, for tRNA binding and peptide bond formation. It has been suggested to have peptidyltransferase activity; this is somewhat controversial. Makes several contacts with the 16S rRNA in the 70S ribosome. This chain is Large ribosomal subunit protein uL2, found in Histophilus somni (strain 2336) (Haemophilus somnus).